A 147-amino-acid polypeptide reads, in one-letter code: Large ribosomal subunit protein uL22 (147 aa).

It belongs to the universal ribosomal protein uL22 family. Part of the 50S ribosomal subunit.

This protein binds specifically to 23S rRNA; its binding is stimulated by other ribosomal proteins, e.g. L4, L17, and L20. It is important during the early stages of 50S assembly. It makes multiple contacts with different domains of the 23S rRNA in the assembled 50S subunit and ribosome. Its function is as follows. The globular domain of the protein is located near the polypeptide exit tunnel on the outside of the subunit, while an extended beta-hairpin is found that lines the wall of the exit tunnel in the center of the 70S ribosome. The sequence is that of Large ribosomal subunit protein uL22 from Fervidobacterium nodosum (strain ATCC 35602 / DSM 5306 / Rt17-B1).